The sequence spans 490 residues: Betaine aldehyde dehydrogenase (490 aa).

K(+) contacts are provided by S26, I27, and D93. NAD(+) is bound at residue G150–W152. The active-site Charge relay system is K162. K176–E179 contacts NAD(+). K(+) is bound at residue V180. G230–T233 contributes to the NAD(+) binding site. Residue L246 participates in K(+) binding. E252 acts as the Proton acceptor in catalysis. 3 residues coordinate NAD(+): G254, C286, and E387. C286 (nucleophile) is an active-site residue. A Cysteine sulfenic acid (-SOH) modification is found at C286. Positions 457 and 460 each coordinate K(+). The active-site Charge relay system is E464.

It belongs to the aldehyde dehydrogenase family. In terms of assembly, dimer of dimers. Requires K(+) as cofactor.

The enzyme catalyses betaine aldehyde + NAD(+) + H2O = glycine betaine + NADH + 2 H(+). Its pathway is amine and polyamine biosynthesis; betaine biosynthesis via choline pathway; betaine from betaine aldehyde: step 1/1. Involved in the biosynthesis of the osmoprotectant glycine betaine. Catalyzes the irreversible oxidation of betaine aldehyde to the corresponding acid. This chain is Betaine aldehyde dehydrogenase, found in Stutzerimonas stutzeri (strain A1501) (Pseudomonas stutzeri).